A 493-amino-acid polypeptide reads, in one-letter code: MSHILAIDQGTTSSRAMVFDASLSLKSVAQEEFPQIYPRPGWVEHDPTDLWSSVAATARAAVERAEIDGSLAAIGITNQRETVVIWERATGHPIHNAIVWQDRRTADLCQSLAEAGQEPMITERTGLLLDPYFSATKVKWLLDHVEGARARARRGELLFGTVDSYLIWKLTGGRSHVTDATNAARTMLFDIRRGEWDAEICGLLDIPMEMLPEVKDCAAPFGMTRADLFGREIPILGVAGDQQAATCGQACFRPGMMKSTYGTGCFALLNTGAERVTSRSRLLTTIAYQLGGQRTYALEGSIFIAGAVVQWLRDGLKIIREAGETHGLATASDAAQDLVIVPAFTGLGAPWWKPDSRGAVFGLTRNSGPAEFARAALESVGYQTRDLLEAMRADWAAGAEGVLRVDGGMTASDWSMQFLADIIGAPVDRPVVRETTALGAAWLAGMQAGLCPGPEEFAAGWALERRFEPRMEAATRDAKYARWGRAVRAVMAV.

Threonine 11 contacts ADP. The ATP site is built by threonine 11, threonine 12, and serine 13. Threonine 11 provides a ligand contact to sn-glycerol 3-phosphate. Arginine 15 lines the ADP pocket. Arginine 80, glutamate 81, tyrosine 132, and aspartate 241 together coordinate sn-glycerol 3-phosphate. Residues arginine 80, glutamate 81, tyrosine 132, aspartate 241, and glutamine 242 each coordinate glycerol. Positions 263 and 306 each coordinate ADP. ATP contacts are provided by threonine 263, glycine 306, glutamine 310, and glycine 408. Glycine 408 is a binding site for ADP.

This sequence belongs to the FGGY kinase family.

It carries out the reaction glycerol + ATP = sn-glycerol 3-phosphate + ADP + H(+). It participates in polyol metabolism; glycerol degradation via glycerol kinase pathway; sn-glycerol 3-phosphate from glycerol: step 1/1. Inhibited by fructose 1,6-bisphosphate (FBP). Key enzyme in the regulation of glycerol uptake and metabolism. Catalyzes the phosphorylation of glycerol to yield sn-glycerol 3-phosphate. The polypeptide is Glycerol kinase (Cereibacter sphaeroides (strain ATCC 17025 / ATH 2.4.3) (Rhodobacter sphaeroides)).